We begin with the raw amino-acid sequence, 981 residues long: Beta-glucuronidase (981 aa).

Residue Glu-500 is the Nucleophile of the active site. Residues Asn-561, Trp-562, Ile-563, Ser-581, and Glu-583 each contribute to the Mg(2+) site.

Belongs to the glycosyl hydrolase 2 family.

It is found in the periplasm. It carries out the reaction a beta-D-glucuronoside + H2O = D-glucuronate + an alcohol. Beta-glucuronidase involved in ulvan degradation. Ulvan is the main polysaccharide component of the Ulvales (green seaweed) cell wall. It is composed of disaccharide building blocks comprising 3-sulfated rhamnose (Rha3S) linked to D-glucuronic acid (GlcA), L-iduronic acid (IduA), or D-xylose (Xyl). Beta-glucuronidase removes GlcA side chains present on some O2 residues of Rha3S. Can remove the GlcA side chains from polymeric ulvan or from smaller oligomers. The protein is Beta-glucuronidase of Formosa agariphila (strain DSM 15362 / KCTC 12365 / LMG 23005 / KMM 3901 / M-2Alg 35-1).